Reading from the N-terminus, the 691-residue chain is Lipase 2 (691 aa).

A signal peptide spans 1–37; it reads MLRGQEERKYSIRKYSIGVVSVLAATMFVVTSHEAQA. The interval 34 to 267 is disordered; sequence EAQASEKIPT…KPTDKNTDNK (234 aa). A propeptide spanning residues 38–296 is cleaved from the precursor; the sequence is SEKIPTTNAA…ADAKKVRPLK (259 aa). Residues 41-72 show a composition bias toward polar residues; the sequence is IPTTNAAAQKETLNQPGEQGNAITSHQMQSGK. Positions 73–82 are enriched in basic and acidic residues; sequence QLDDMHKENG. Polar residues-rich tracts occupy residues 94–115, 125–135, 142–172, and 186–196; these read LQSS…NDNQ, SKQSHQNNATN, DQIQ…QPSI, and PTSTTPPSNDK. Basic and acidic residues-rich tracts occupy residues 197 to 214 and 258 to 267; these read TAPK…KHPN and KPTDKNTDNK. The Nucleophile role is filled by Ser-413. Gly-580 provides a ligand contact to Ca(2+). The Charge relay system role is filled by Asp-604. Asp-645 lines the Ca(2+) pocket. The active-site Charge relay system is His-646. Ca(2+) is bound by residues Asp-648, Asp-653, and Asp-656.

It belongs to the AB hydrolase superfamily. Lipase family.

It localises to the secreted. The catalysed reaction is a triacylglycerol + H2O = a diacylglycerol + a fatty acid + H(+). This is Lipase 2 (lip2) from Staphylococcus aureus (strain MRSA252).